Reading from the N-terminus, the 277-residue chain is Sulfate transport system permease protein CysT (277 aa).

7 helical membrane passes run L17–M37, L64–I84, L99–F119, V136–V156, V188–F205, V215–V235, and P243–I263. An ABC transmembrane type-1 domain is found at Y60–I263.

This sequence belongs to the binding-protein-dependent transport system permease family. CysTW subfamily. As to quaternary structure, the complex is composed of two ATP-binding proteins (CysA), two transmembrane proteins (CysT and CysW) and a solute-binding protein (CysP).

It is found in the cell inner membrane. Its function is as follows. Part of the ABC transporter complex CysAWTP (TC 3.A.1.6.1) involved in sulfate/thiosulfate import. Probably responsible for the translocation of the substrate across the membrane. This chain is Sulfate transport system permease protein CysT (cysU), found in Salmonella typhimurium (strain LT2 / SGSC1412 / ATCC 700720).